The chain runs to 517 residues: 2-isopropylmalate synthase (517 aa).

A Pyruvate carboxyltransferase domain is found at 4 to 266 (INFFDTTLRD…ESTIQLNEIK (263 aa)). 4 residues coordinate Mn(2+): D13, H201, H203, and N237. The tract at residues 391–517 (EFESLQVHYG…IEIEKHHAIS (127 aa)) is regulatory domain.

The protein belongs to the alpha-IPM synthase/homocitrate synthase family. LeuA type 1 subfamily. As to quaternary structure, homodimer. Mn(2+) is required as a cofactor.

It localises to the cytoplasm. The catalysed reaction is 3-methyl-2-oxobutanoate + acetyl-CoA + H2O = (2S)-2-isopropylmalate + CoA + H(+). It functions in the pathway amino-acid biosynthesis; L-leucine biosynthesis; L-leucine from 3-methyl-2-oxobutanoate: step 1/4. In terms of biological role, catalyzes the condensation of the acetyl group of acetyl-CoA with 3-methyl-2-oxobutanoate (2-ketoisovalerate) to form 3-carboxy-3-hydroxy-4-methylpentanoate (2-isopropylmalate). The chain is 2-isopropylmalate synthase from Bacillus pumilus (strain SAFR-032).